Consider the following 161-residue polypeptide: Type IV major fimbrial protein FimA (161 aa).

Positions 1–7 are cleaved as a propeptide — leader sequence; the sequence is MKSLQKG. F8 bears the N-methylphenylalanine mark. The chain crosses the membrane as a helical span at residues 8–28; it reads FTLIELMIVVAIIGILAAFAI. Residues C63 and C106 are joined by a disulfide bond.

This sequence belongs to the N-Me-Phe pilin family. The pili are polar flexible filaments of about 5.4 nanometers diameter and 2.5 micrometers average length; they consist of only a single polypeptide chain arranged in a helical configuration of five subunits per turn in the assembled pilus.

The protein resides in the fimbrium. It localises to the membrane. Its function is as follows. Major component of the type IV fimbriae that plays an essential role in twitching motility, natural transformation, and protease secretion. This is Type IV major fimbrial protein FimA (fimA) from Dichelobacter nodosus (Bacteroides nodosus).